Here is a 194-residue protein sequence, read N- to C-terminus: Large ribosomal subunit protein bL9 (194 aa).

The interval 148-194 (QDEAERQARGENVINSQFEEDRAAEAEAAQDMAEGGAGSFEGDHYEA) is disordered.

This sequence belongs to the bacterial ribosomal protein bL9 family.

Functionally, binds to the 23S rRNA. This is Large ribosomal subunit protein bL9 from Caulobacter vibrioides (strain ATCC 19089 / CIP 103742 / CB 15) (Caulobacter crescentus).